The following is a 423-amino-acid chain: 4-hydroxy-3-methylbut-2-en-1-yl diphosphate synthase (flavodoxin) (423 aa).

[4Fe-4S] cluster-binding residues include C307, C310, C353, and E360.

The protein belongs to the IspG family. [4Fe-4S] cluster serves as cofactor.

The catalysed reaction is (2E)-4-hydroxy-3-methylbut-2-enyl diphosphate + oxidized [flavodoxin] + H2O + 2 H(+) = 2-C-methyl-D-erythritol 2,4-cyclic diphosphate + reduced [flavodoxin]. The protein operates within isoprenoid biosynthesis; isopentenyl diphosphate biosynthesis via DXP pathway; isopentenyl diphosphate from 1-deoxy-D-xylulose 5-phosphate: step 5/6. Its function is as follows. Converts 2C-methyl-D-erythritol 2,4-cyclodiphosphate (ME-2,4cPP) into 1-hydroxy-2-methyl-2-(E)-butenyl 4-diphosphate. This Brucella anthropi (strain ATCC 49188 / DSM 6882 / CCUG 24695 / JCM 21032 / LMG 3331 / NBRC 15819 / NCTC 12168 / Alc 37) (Ochrobactrum anthropi) protein is 4-hydroxy-3-methylbut-2-en-1-yl diphosphate synthase (flavodoxin).